The sequence spans 279 residues: Large ribosomal subunit protein uL24m (279 aa).

The transit peptide at 1 to 31 directs the protein to the mitochondrion; the sequence is MRDLRKLIPRLRGPGTNVLKMKKPLPLHMRT. Basic and acidic residues predominate over residues 34–51; sequence REHLNKSDPTVKDDKSAK. The segment at 34–56 is disordered; the sequence is REHLNKSDPTVKDDKSAKPELPF. The KOW domain occupies 70 to 100; sequence KGDYVYVHQGPLKGKWGRVVETNKYTNGITI. Positions 185-204 are disordered; that stretch reads PRPKTEDKPKDPEGKLDTKN. A compositionally biased stretch (basic and acidic residues) spans 187-202; that stretch reads PKTEDKPKDPEGKLDT.

The protein belongs to the universal ribosomal protein uL24 family. In terms of assembly, component of the mitochondrial large ribosomal subunit (mt-LSU). Mature yeast 74S mitochondrial ribosomes consist of a small (37S) and a large (54S) subunit. The 37S small subunit contains a 15S ribosomal RNA (15S mt-rRNA) and at least 32 different proteins. The 54S large subunit contains a 21S rRNA (21S mt-rRNA) and at least 45 different proteins. uL24m forms the wall of the exit tunnel.

It is found in the mitochondrion. In terms of biological role, component of the mitochondrial ribosome (mitoribosome), a dedicated translation machinery responsible for the synthesis of mitochondrial genome-encoded proteins, including at least some of the essential transmembrane subunits of the mitochondrial respiratory chain. The mitoribosomes are attached to the mitochondrial inner membrane and translation products are cotranslationally integrated into the membrane. This is Large ribosomal subunit protein uL24m (mrpl40) from Schizosaccharomyces pombe (strain 972 / ATCC 24843) (Fission yeast).